The sequence spans 525 residues: Ribosomal protein S6 kinase beta-1 (525 aa).

The TOS motif signature appears at 28–32 (FDIDL). The segment covering 32 to 46 (LDQPEDAGSEDELEE) has biased composition (acidic residues). Residues 32 to 54 (LDQPEDAGSEDELEEGGQLNESM) form a disordered region. Positions 91 to 352 (FELLRVLGKG…AGEVQAHPFF (262 aa)) constitute a Protein kinase domain. ATP-binding positions include 97-105 (LGKGGYGKV) and Lys-123. Asp-218 serves as the catalytic Proton acceptor. At Thr-252 the chain carries Phosphothreonine; by PDPK1. Positions 353 to 423 (RHINWEELLA…VAPSVLESVK (71 aa)) constitute an AGC-kinase C-terminal domain. The interval 380-399 (SQFDSKFTRQTPVDSPDDST) is disordered. Over residues 381-399 (QFDSKFTRQTPVDSPDDST) the composition is skewed to polar residues. Ser-394 is subject to Phosphoserine. Residue Thr-412 is modified to Phosphothreonine; by MTOR, NEK6 and NEK7. An autoinhibitory domain region spans residues 424 to 525 (EKFSFEPKIR…KRPEHLRMNL (102 aa)). Residues Ser-434 and Ser-441 each carry the phosphoserine modification. Thr-444 carries the phosphothreonine modification. 2 positions are modified to phosphoserine: Ser-447 and Ser-452. The residue at position 516 (Lys-516) is an N6-acetyllysine.

It belongs to the protein kinase superfamily. AGC Ser/Thr protein kinase family. S6 kinase subfamily. In terms of assembly, interacts with PPP1R9A/neurabin-1. Interacts with RPTOR. Interacts with IRS1. Interacts with EIF3B and EIF3C. Interacts with TRAF4. Interacts with POLDIP3. Interacts (via N-terminus) with IER5. In terms of processing, phosphorylation at Thr-412 is regulated by mTORC1. The phosphorylation at this site is maintained by an agonist-dependent autophosphorylation mechanism. Activated by phosphorylation at Thr-252 by PDPK1. Dephosphorylation by PPP1CC at Thr-412 in mitochondrion.

It is found in the cytoplasm. The protein localises to the synapse. Its subcellular location is the synaptosome. It localises to the mitochondrion outer membrane. The protein resides in the mitochondrion. It catalyses the reaction L-seryl-[protein] + ATP = O-phospho-L-seryl-[protein] + ADP + H(+). It carries out the reaction L-threonyl-[protein] + ATP = O-phospho-L-threonyl-[protein] + ADP + H(+). With respect to regulation, activation requires multiple phosphorylation events on serine/threonine residues. Activation appears to be first mediated by phosphorylation of multiple sites in the autoinhibitory domain, which facilitates phosphorylation at Thr-412, disrupting the autoinhibitory mechanism and allowing phosphorylation of Thr-252 by PDPK1. The active conformation of the kinase is believed to be stabilized by a mechanism involving three conserved phosphorylation sites located in the kinase domain activation loop (Thr-252) and in the AGC-kinase C-terminal domain (Ser-394 in the middle of the tail/linker region and Thr-412 within a hydrophobic motif at its end). Activated by mTORC1; isoform Alpha I and isoform Alpha II are sensitive to rapamycin, which inhibits activating phosphorylation at Thr-412. Activated by PDPK1. Its function is as follows. Serine/threonine-protein kinase that acts downstream of mTOR signaling in response to growth factors and nutrients to promote cell proliferation, cell growth and cell cycle progression. Regulates protein synthesis through phosphorylation of EIF4B, RPS6 and EEF2K, and contributes to cell survival by repressing the pro-apoptotic function of BAD. Under conditions of nutrient depletion, the inactive form associates with the EIF3 translation initiation complex. Upon mitogenic stimulation, phosphorylation by the mechanistic target of rapamycin complex 1 (mTORC1) leads to dissociation from the EIF3 complex and activation. The active form then phosphorylates and activates several substrates in the pre-initiation complex, including the EIF2B complex and the cap-binding complex component EIF4B. Also controls translation initiation by phosphorylating a negative regulator of EIF4A, PDCD4, targeting it for ubiquitination and subsequent proteolysis. Promotes initiation of the pioneer round of protein synthesis by phosphorylating POLDIP3/SKAR. In response to IGF1, activates translation elongation by phosphorylating EEF2 kinase (EEF2K), which leads to its inhibition and thus activation of EEF2. Also plays a role in feedback regulation of mTORC2 by mTORC1 by phosphorylating MAPKAP1/SIN1, MTOR and RICTOR, resulting in the inhibition of mTORC2 and AKT1 signaling. Also involved in feedback regulation of mTORC1 and mTORC2 by phosphorylating DEPTOR. Mediates cell survival by phosphorylating the pro-apoptotic protein BAD and suppressing its pro-apoptotic function. Phosphorylates mitochondrial URI1 leading to dissociation of a URI1-PPP1CC complex. The free mitochondrial PPP1CC can then dephosphorylate RPS6KB1 at Thr-412, which is proposed to be a negative feedback mechanism for the RPS6KB1 anti-apoptotic function. Mediates TNF-alpha-induced insulin resistance by phosphorylating IRS1 at multiple serine residues, resulting in accelerated degradation of IRS1. In cells lacking functional TSC1-2 complex, constitutively phosphorylates and inhibits GSK3B. May be involved in cytoskeletal rearrangement through binding to neurabin. Phosphorylates and activates the pyrimidine biosynthesis enzyme CAD, downstream of MTOR. Following activation by mTORC1, phosphorylates EPRS and thereby plays a key role in fatty acid uptake by adipocytes and also most probably in interferon-gamma-induced translation inhibition. This chain is Ribosomal protein S6 kinase beta-1 (Rps6kb1), found in Mus musculus (Mouse).